A 574-amino-acid polypeptide reads, in one-letter code: Serine/threonine-protein kinase B (574 aa).

A Protein kinase domain is found at 34–301 (YQTLGLLGKG…VLDALEMPTY (268 aa)). Residues 40 to 48 (LGKGGFGAT) and Lys-65 each bind ATP. Catalysis depends on Asp-163, which acts as the Proton acceptor. Positions 319 to 407 (GAGDEPATGI…GGSVGAGGID (89 aa)) are disordered. Polar residues predominate over residues 343-364 (TRFNTNVQPRDPSSTSLNTGIK). Pentapeptide repeat domains follow at residues 454–493 (QNLV…DFGK) and 504–543 (ANLS…NFSG).

This sequence belongs to the protein kinase superfamily. Ser/Thr protein kinase family. Autophosphorylated.

It carries out the reaction L-seryl-[protein] + ATP = O-phospho-L-seryl-[protein] + ADP + H(+). The catalysed reaction is L-threonyl-[protein] + ATP = O-phospho-L-threonyl-[protein] + ADP + H(+). In terms of biological role, protein kinase required for cell motility, but not for phototaxis. This Synechocystis sp. (strain ATCC 27184 / PCC 6803 / Kazusa) protein is Serine/threonine-protein kinase B (spkB).